The following is an 84-amino-acid chain: Sec-independent protein translocase protein TatA (84 aa).

The chain crosses the membrane as a helical span at residues 1 to 21; the sequence is MGGFSIWHWLIVLLIVVMVFG. The interval 40–84 is disordered; it reads KDGMKDGGQSPADEKPVVPASQVTNAQAADKAERNTIDVEARQKS. Basic and acidic residues predominate over residues 69–84; sequence DKAERNTIDVEARQKS.

The protein belongs to the TatA/E family. As to quaternary structure, the Tat system comprises two distinct complexes: a TatABC complex, containing multiple copies of TatA, TatB and TatC subunits, and a separate TatA complex, containing only TatA subunits. Substrates initially bind to the TatABC complex, which probably triggers association of the separate TatA complex to form the active translocon.

The protein localises to the cell inner membrane. In terms of biological role, part of the twin-arginine translocation (Tat) system that transports large folded proteins containing a characteristic twin-arginine motif in their signal peptide across membranes. TatA could form the protein-conducting channel of the Tat system. This Polaromonas naphthalenivorans (strain CJ2) protein is Sec-independent protein translocase protein TatA.